The primary structure comprises 167 residues: Small ribosomal subunit protein uS5 (167 aa).

The region spanning 12–75 is the S5 DRBM domain; the sequence is LQEKLVQVNR…EAARRNMIQV (64 aa).

Belongs to the universal ribosomal protein uS5 family. As to quaternary structure, part of the 30S ribosomal subunit. Contacts proteins S4 and S8.

In terms of biological role, with S4 and S12 plays an important role in translational accuracy. Functionally, located at the back of the 30S subunit body where it stabilizes the conformation of the head with respect to the body. This chain is Small ribosomal subunit protein uS5, found in Alcanivorax borkumensis (strain ATCC 700651 / DSM 11573 / NCIMB 13689 / SK2).